Reading from the N-terminus, the 355-residue chain is tRNA-specific 2-thiouridylase MnmA 1 (355 aa).

6–13 contacts ATP; it reads LLSGGVDS. Residues 92–94 form an interaction with target base in tRNA region; sequence NPD. Cysteine 97 acts as the Nucleophile in catalysis. A disulfide bridge connects residues cysteine 97 and cysteine 192. Glycine 120 contacts ATP. The segment at 142–144 is interaction with tRNA; that stretch reads KDQ. Cysteine 192 serves as the catalytic Cysteine persulfide intermediate.

It belongs to the MnmA/TRMU family.

The protein resides in the cytoplasm. The catalysed reaction is S-sulfanyl-L-cysteinyl-[protein] + uridine(34) in tRNA + AH2 + ATP = 2-thiouridine(34) in tRNA + L-cysteinyl-[protein] + A + AMP + diphosphate + H(+). Its function is as follows. Catalyzes the 2-thiolation of uridine at the wobble position (U34) of tRNA, leading to the formation of s(2)U34. The polypeptide is tRNA-specific 2-thiouridylase MnmA 1 (Bacteroides thetaiotaomicron (strain ATCC 29148 / DSM 2079 / JCM 5827 / CCUG 10774 / NCTC 10582 / VPI-5482 / E50)).